The following is a 525-amino-acid chain: GMP synthase [glutamine-hydrolyzing] (525 aa).

The region spanning arginine 9 to leucine 207 is the Glutamine amidotransferase type-1 domain. The active-site Nucleophile is the cysteine 86. Catalysis depends on residues histidine 181 and glutamate 183. The 193-residue stretch at tryptophan 208–arginine 400 folds into the GMPS ATP-PPase domain. Position 235 to 241 (serine 235 to serine 241) interacts with ATP.

In terms of assembly, homodimer.

It carries out the reaction XMP + L-glutamine + ATP + H2O = GMP + L-glutamate + AMP + diphosphate + 2 H(+). It functions in the pathway purine metabolism; GMP biosynthesis; GMP from XMP (L-Gln route): step 1/1. Catalyzes the synthesis of GMP from XMP. The polypeptide is GMP synthase [glutamine-hydrolyzing] (Pseudomonas syringae pv. syringae (strain B728a)).